We begin with the raw amino-acid sequence, 139 residues long: Cystatin cpi-1 (139 aa).

The N-terminal stretch at 1-19 (MRFILLIALVFAVLDGINC) is a signal peptide. Residue Asn29 is glycosylated (N-linked (GlcNAc...) asparagine). The Secondary area of contact signature appears at 65–69 (QVVAG). Cys83 and Cys99 are oxidised to a cystine.

Belongs to the cystatin family.

Cysteine protease inhibitor which inhibits members of the peptidase C1 family. Does not inhibit asparaginyl endopeptidase. May play a protective role against exogenous cysteine proteases derived from soil bacteria or fungi, or rotting fruits and vegetation. This chain is Cystatin cpi-1, found in Caenorhabditis elegans.